Reading from the N-terminus, the 85-residue chain is Glutaredoxin (85 aa).

Residues Met1 to Pro85 enclose the Glutaredoxin domain. Residues Cys12 and Cys15 are joined by a disulfide bond.

It belongs to the glutaredoxin family. As to quaternary structure, monomer.

It is found in the cytoplasm. Has a glutathione-disulfide oxidoreductase activity in the presence of NADPH and glutathione reductase. Reduces low molecular weight disulfides and proteins. The chain is Glutaredoxin (grx) from Neisseria meningitidis serogroup A / serotype 4A (strain DSM 15465 / Z2491).